We begin with the raw amino-acid sequence, 71 residues long: Disintegrin halysin (71 aa).

The 71-residue stretch at Glu1 to Phe71 folds into the Disintegrin domain. 6 disulfide bridges follow: Cys6-Cys21, Cys8-Cys16, Cys15-Cys38, Cys29-Cys35, Cys34-Cys59, and Cys47-Cys66. Positions Arg51 to Asp53 match the Cell attachment site motif.

The protein belongs to the venom metalloproteinase (M12B) family. P-II subfamily. P-IIa sub-subfamily. As to quaternary structure, monomer. Expressed by the venom gland.

Its subcellular location is the secreted. Inhibits fibrinogen interaction with platelets. Acts by binding to alpha-IIb/beta-3 (ITGA2B/ITGB3) on the platelet surface and inhibits aggregation induced by ADP, thrombin, platelet-activating factor and collagen. The chain is Disintegrin halysin from Gloydius blomhoffii (Mamushi).